Consider the following 58-residue polypeptide: Mastoparan-VT7 (58 aa).

A signal peptide spans 1–27 (MKNTILILFTAFIALLGFFGMSAEALA). AXPX repeat units follow at residues 27-30 (ADPK), 31-34 (ADPL), 35-38 (AGPN), and 41-44 (ADPE). Positions 28-45 (DPKADPLAGPNPDADPEA) are excised as a propeptide.

Belongs to the MCD family. Mastoparan subfamily. In terms of tissue distribution, expressed by the venom gland.

It localises to the secreted. The synthetic peptide shows antimicrobial activities against Gram-negative bacteria (but not against all strains tested), Gram-positive bacteria (all strains tested) and the fungi C.albicans (but not C.parapsilosis). Exhibits little hemolytic activity against washed human erythrocytes. This is Mastoparan-VT7 from Vespa tropica (Greater banded hornet).